The primary structure comprises 203 residues: Holliday junction branch migration complex subunit RuvA (203 aa).

The segment at 1–64 (MFAYFRGRLT…EDAFLLYGFS (64 aa)) is domain I. Positions 65–143 (SESERQLFRL…KMSPDGGKTI (79 aa)) are domain II. Positions 144–150 (ASGSGGN) are flexible linker. Positions 151-203 (LALQIKDDALNALITLGFSKPAAQKAVTGILEGNPSLSVEEVVKSALVSIHNS) are domain III.

It belongs to the RuvA family. Homotetramer. Forms an RuvA(8)-RuvB(12)-Holliday junction (HJ) complex. HJ DNA is sandwiched between 2 RuvA tetramers; dsDNA enters through RuvA and exits via RuvB. An RuvB hexamer assembles on each DNA strand where it exits the tetramer. Each RuvB hexamer is contacted by two RuvA subunits (via domain III) on 2 adjacent RuvB subunits; this complex drives branch migration. In the full resolvosome a probable DNA-RuvA(4)-RuvB(12)-RuvC(2) complex forms which resolves the HJ.

It localises to the cytoplasm. The RuvA-RuvB-RuvC complex processes Holliday junction (HJ) DNA during genetic recombination and DNA repair, while the RuvA-RuvB complex plays an important role in the rescue of blocked DNA replication forks via replication fork reversal (RFR). RuvA specifically binds to HJ cruciform DNA, conferring on it an open structure. The RuvB hexamer acts as an ATP-dependent pump, pulling dsDNA into and through the RuvAB complex. HJ branch migration allows RuvC to scan DNA until it finds its consensus sequence, where it cleaves and resolves the cruciform DNA. In Chlorobium limicola (strain DSM 245 / NBRC 103803 / 6330), this protein is Holliday junction branch migration complex subunit RuvA.